Here is a 306-residue protein sequence, read N- to C-terminus: Nucleotide-binding protein MUL_1815 (306 aa).

29 to 36 (GLSGAGRG) is a binding site for ATP. Residue 80–83 (DVRS) coordinates GTP.

This sequence belongs to the RapZ-like family.

Functionally, displays ATPase and GTPase activities. The protein is Nucleotide-binding protein MUL_1815 of Mycobacterium ulcerans (strain Agy99).